Here is a 364-residue protein sequence, read N- to C-terminus: Growth hormone secretagogue receptor type 1 (364 aa).

At 1 to 40 (MWNATPSEEPEPNVTLDLDWDASPGNDSLPDELLPLFPAP) the chain is on the extracellular side. N-linked (GlcNAc...) asparagine glycans are attached at residues asparagine 13 and asparagine 26. A helical transmembrane segment spans residues 41 to 66 (LLAGVTATCVALFVVGISGNLLTMLV). At 67–72 (VSRFRE) the chain is on the cytoplasmic side. A helical membrane pass occupies residues 73–96 (LRTTTNLYLSSMAFSDLLIFLCMP). At 97-117 (LDLVRLWQYRPWNFGDLLCKL) the chain is on the extracellular side. Cysteine 115 and cysteine 197 are oxidised to a cystine. The helical transmembrane segment at 118 to 139 (FQFVSESCTYATVLTITALSVE) threads the bilayer. Residues 140–162 (RYFAICFPLRAKVVVTKGRVKLV) are Cytoplasmic-facing. A helical membrane pass occupies residues 163-183 (ILVIWAVAFCSAGPIFVLVGV). Residues 184-211 (EHENGTDPRDTNECRATEFAVRSGLLTV) are Extracellular-facing. Asparagine 187 carries N-linked (GlcNAc...) asparagine glycosylation. Residues 212–235 (MVWVSSVFFFLPVFCLTVLYSLIG) traverse the membrane as a helical segment. The Cytoplasmic segment spans residues 236–263 (RKLWRRRGDAAVGASLRDQNHKQTVKML). The chain crosses the membrane as a helical span at residues 264–285 (AVVVFAFILCWLPFHVGRYLFS). At 286–302 (KSFEPGSLEIAQISQYC) the chain is on the extracellular side. The helical transmembrane segment at 303–326 (NLVSFVLFYLSAAINPILYNIMSK) threads the bilayer. The Cytoplasmic segment spans residues 327–364 (KYRVAVFKLLGFESFSQRKLSTLKDESSRAWTKSSINT).

The protein belongs to the G-protein coupled receptor 1 family.

It is found in the cell membrane. In terms of biological role, receptor for ghrelin, coupled to G-alpha-11 proteins. Stimulates growth hormone secretion. Also binds other growth hormone releasing peptides (GHRP) (e.g. Met-enkephalin and GHRP-6) as well as non-peptide, low molecular weight secretagogues (e.g. L-692,429, MK-0677, adenosine). This chain is Growth hormone secretagogue receptor type 1 (Ghsr), found in Rattus norvegicus (Rat).